Consider the following 85-residue polypeptide: uncharacterized protein (85 aa).

The next 2 membrane-spanning stretches (helical) occupy residues 14-34 (FLFG…RATI) and 60-80 (IFVY…IYFL).

It is found in the cell membrane. This is an uncharacterized protein from Escherichia coli O157:H7.